The following is a 550-amino-acid chain: Glucose-6-phosphate isomerase (550 aa).

E356 serves as the catalytic Proton donor. Residues H387 and K515 contribute to the active site.

The protein belongs to the GPI family.

The protein localises to the cytoplasm. It catalyses the reaction alpha-D-glucose 6-phosphate = beta-D-fructose 6-phosphate. It functions in the pathway carbohydrate biosynthesis; gluconeogenesis. It participates in carbohydrate degradation; glycolysis; D-glyceraldehyde 3-phosphate and glycerone phosphate from D-glucose: step 2/4. Catalyzes the reversible isomerization of glucose-6-phosphate to fructose-6-phosphate. This is Glucose-6-phosphate isomerase from Vibrio parahaemolyticus serotype O3:K6 (strain RIMD 2210633).